A 70-amino-acid chain; its full sequence is Large ribosomal subunit protein bL31 (70 aa).

Zn(2+) is bound by residues Cys-16, Cys-18, Cys-37, and Cys-40. The disordered stretch occupies residues 48–70 (QRQASSGGRVDKFNKRFGALGSK).

Belongs to the bacterial ribosomal protein bL31 family. Type A subfamily. Part of the 50S ribosomal subunit. The cofactor is Zn(2+).

In terms of biological role, binds the 23S rRNA. This Photobacterium profundum (strain SS9) protein is Large ribosomal subunit protein bL31.